The following is a 190-amino-acid chain: Signal peptidase I W (190 aa).

A helical transmembrane segment spans residues 4-24 (ISNILYVIIFTLIIVLTLVVI). The active site involves serine 45. A helical membrane pass occupies residues 143-163 (PIGTAVLLIVPGVMLLVYAFV).

The protein belongs to the peptidase S26B family.

Its subcellular location is the cell membrane. The catalysed reaction is Cleavage of hydrophobic, N-terminal signal or leader sequences from secreted and periplasmic proteins.. Its function is as follows. Required for the cleavage of the signal sequence of TasA and TapA, which are involved in biofilm formation. In Bacillus subtilis (strain 168), this protein is Signal peptidase I W.